The sequence spans 142 residues: Large ribosomal subunit protein uL13 (142 aa).

It belongs to the universal ribosomal protein uL13 family. In terms of assembly, part of the 50S ribosomal subunit.

Functionally, this protein is one of the early assembly proteins of the 50S ribosomal subunit, although it is not seen to bind rRNA by itself. It is important during the early stages of 50S assembly. This chain is Large ribosomal subunit protein uL13, found in Sodalis glossinidius (strain morsitans).